We begin with the raw amino-acid sequence, 503 residues long: Lactation elevated protein 1 homolog B (503 aa).

Residues 108–155 (LQNQPTSELQDKVGSRETVNICRPDENVSNEKEDQQEESSKPHPPQGY) are disordered. Residues 130-148 (RPDENVSNEKEDQQEESSK) show a composition bias toward basic and acidic residues. An ATP-binding site is contributed by 159 to 166 (GNVGTGKT).

This sequence belongs to the AFG1 ATPase family.

In Danio rerio (Zebrafish), this protein is Lactation elevated protein 1 homolog B (lace1b).